The following is a 501-amino-acid chain: Probable histidine--tRNA ligase, mitochondrial (501 aa).

The interval 32 to 54 (TNSNNNNNNNNNNNNNNNNNKNI) is disordered. The span at 33–54 (NSNNNNNNNNNNNNNNNNNKNI) shows a compositional bias: low complexity.

This sequence belongs to the class-II aminoacyl-tRNA synthetase family.

The protein localises to the mitochondrion matrix. The enzyme catalyses tRNA(His) + L-histidine + ATP = L-histidyl-tRNA(His) + AMP + diphosphate + H(+). In Dictyostelium discoideum (Social amoeba), this protein is Probable histidine--tRNA ligase, mitochondrial (mhisS).